Reading from the N-terminus, the 339-residue chain is Serpentine receptor class r-10 (339 aa).

Topologically, residues 1 to 11 (MSGELWITLVD) are extracellular. A helical transmembrane segment spans residues 12–32 (TADIVGVTLTFCVNIVLLGLL). At 33–42 (KTRGKNLGTY) the chain is on the cytoplasmic side. A helical membrane pass occupies residues 43-63 (KYLMAFFSVFSIFYAIIEFIL). Residues 64–92 (RPIMHIENTTFFLISRKRFNYSTKLGKIN) lie on the Extracellular side of the membrane. N-linked (GlcNAc...) asparagine glycosylation is found at Asn-71 and Asn-83. Residues 93-113 (SAFYCACFATSFVVSGVHFVY) traverse the membrane as a helical segment. The Cytoplasmic segment spans residues 114 to 131 (RYFATCKPNLLRLFNLPT). A helical transmembrane segment spans residues 132 to 152 (LLLWPLGCSVPVTMWASVSYF). Residues 153 to 201 (LYPDTEYTEAAVTNVLNNHYNWIKKENVSYIAYVYYQYENGVRHIYLKN) are Extracellular-facing. An N-linked (GlcNAc...) asparagine glycan is attached at Asn-179. The chain crosses the membrane as a helical span at residues 202–222 (LLGCFVHYFVMSMTFVVMFYC). Residues 223 to 254 (GYATWKTMNEHKDVSDRTRALQKQLFKALVLQ) are Cytoplasmic-facing. The helical transmembrane segment at 255–275 (TLIPTIFMYAPTGVMFIAPFF) threads the bilayer. At 276–284 (DVNLNANAN) the chain is on the extracellular side. A helical transmembrane segment spans residues 285 to 305 (FIVFCSFLYPGLDPLILILII). At 306–339 (RDFRRTIFNFLCGKKNSVDESRSTTRANLSQVPT) the chain is on the cytoplasmic side.

The protein belongs to the nematode receptor-like protein str family. Interacts with odr-4. In terms of tissue distribution, strongly expressed in the sensory cilia of AWA olfactory neurons, and at low levels in the CEP neurons.

The protein localises to the cell projection. Its subcellular location is the cilium membrane. In terms of biological role, an odorant receptor which affects chemotaxis to the volatile odorant diacetyl. Specifies AWA neuronal cell fate via the odr-7 pathway. This Caenorhabditis elegans protein is Serpentine receptor class r-10.